The following is a 360-amino-acid chain: Chorismate synthase (360 aa).

R48 and R54 together coordinate NADP(+). FMN is bound by residues 125–127 (RSS), 246–247 (NA), G286, 301–305 (KPTSS), and R327.

It belongs to the chorismate synthase family. In terms of assembly, homotetramer. FMNH2 is required as a cofactor.

The catalysed reaction is 5-O-(1-carboxyvinyl)-3-phosphoshikimate = chorismate + phosphate. The protein operates within metabolic intermediate biosynthesis; chorismate biosynthesis; chorismate from D-erythrose 4-phosphate and phosphoenolpyruvate: step 7/7. Functionally, catalyzes the anti-1,4-elimination of the C-3 phosphate and the C-6 proR hydrogen from 5-enolpyruvylshikimate-3-phosphate (EPSP) to yield chorismate, which is the branch point compound that serves as the starting substrate for the three terminal pathways of aromatic amino acid biosynthesis. This reaction introduces a second double bond into the aromatic ring system. The chain is Chorismate synthase from Actinobacillus pleuropneumoniae serotype 7 (strain AP76).